A 136-amino-acid polypeptide reads, in one-letter code: Large ribosomal subunit protein uL16c (136 aa).

Residues 1-17 show a composition bias toward basic residues; that stretch reads MLSPKRVKFRKQHRGRM. Positions 1 to 25 are disordered; the sequence is MLSPKRVKFRKQHRGRMKGISTRGN.

This sequence belongs to the universal ribosomal protein uL16 family. Part of the 50S ribosomal subunit.

The protein localises to the plastid. The protein resides in the chloroplast. The chain is Large ribosomal subunit protein uL16c from Anthoceros angustus (Hornwort).